The chain runs to 601 residues: Elongation factor 4 (601 aa).

The region spanning 6–188 (SHIRNFSIIA…QIVHRVPAPE (183 aa)) is the tr-type G domain. GTP-binding positions include 18-23 (DHGKST) and 135-138 (NKID).

This sequence belongs to the TRAFAC class translation factor GTPase superfamily. Classic translation factor GTPase family. LepA subfamily.

It localises to the cell inner membrane. It catalyses the reaction GTP + H2O = GDP + phosphate + H(+). Its function is as follows. Required for accurate and efficient protein synthesis under certain stress conditions. May act as a fidelity factor of the translation reaction, by catalyzing a one-codon backward translocation of tRNAs on improperly translocated ribosomes. Back-translocation proceeds from a post-translocation (POST) complex to a pre-translocation (PRE) complex, thus giving elongation factor G a second chance to translocate the tRNAs correctly. Binds to ribosomes in a GTP-dependent manner. This Anaeromyxobacter sp. (strain K) protein is Elongation factor 4.